A 596-amino-acid chain; its full sequence is Probable ATP-dependent RNA helicase DDX52 (596 aa).

Lys15 bears the N6-acetyllysine mark. A Phosphoserine modification is found at Ser39. The tract at residues 68–94 (LPDEEKTEESQIERKKQNRKKKKITSE) is disordered. The Q motif signature appears at 163-191 (QLDQEYKINSRLLQNILDAGFQTPTPIQM). The Helicase ATP-binding domain maps to 194–372 (IPVMLHGREL…RLNLDSVITV (179 aa)). 207-214 (APTGSGKT) lines the ATP pocket. Residues 316–319 (DESD) carry the DEAD box motif. A Helicase C-terminal domain is found at 383 to 544 (TVEQELLFVG…PVPEYIKGFQ (162 aa)). A disordered region spans residues 575–596 (AKDKRKKVTGQNKKKVAPEDKS). Basic residues predominate over residues 577–589 (DKRKKVTGQNKKK).

Belongs to the DEAD box helicase family. DDX52/ROK1 subfamily.

Its subcellular location is the nucleus. The protein resides in the nucleolus. The catalysed reaction is ATP + H2O = ADP + phosphate + H(+). This chain is Probable ATP-dependent RNA helicase DDX52 (DDX52), found in Bos taurus (Bovine).